The chain runs to 218 residues: Probable nicotinate-nucleotide adenylyltransferase (218 aa).

Belongs to the NadD family.

The enzyme catalyses nicotinate beta-D-ribonucleotide + ATP + H(+) = deamido-NAD(+) + diphosphate. It participates in cofactor biosynthesis; NAD(+) biosynthesis; deamido-NAD(+) from nicotinate D-ribonucleotide: step 1/1. Functionally, catalyzes the reversible adenylation of nicotinate mononucleotide (NaMN) to nicotinic acid adenine dinucleotide (NaAD). This chain is Probable nicotinate-nucleotide adenylyltransferase, found in Burkholderia lata (strain ATCC 17760 / DSM 23089 / LMG 22485 / NCIMB 9086 / R18194 / 383).